The chain runs to 163 residues: Putative pre-16S rRNA nuclease (163 aa).

This sequence belongs to the YqgF nuclease family.

It localises to the cytoplasm. Could be a nuclease involved in processing of the 5'-end of pre-16S rRNA. The chain is Putative pre-16S rRNA nuclease from Nitrobacter winogradskyi (strain ATCC 25391 / DSM 10237 / CIP 104748 / NCIMB 11846 / Nb-255).